The primary structure comprises 349 residues: Transcription repressor OFP5 (349 aa).

3 disordered regions span residues 1 to 20, 29 to 94, and 143 to 183; these read MMRW…GLSR, KLSG…KESN, and KQRC…GYSR. Low complexity predominate over residues 10 to 20; the sequence is VSSSSSSGLSR. The segment covering 37 to 48 has biased composition (basic and acidic residues); sequence KPAKEKKQDEKA. A compositionally biased stretch (polar residues) spans 49 to 62; sequence SQNISVKTSLSSTT. Basic and acidic residues-rich tracts occupy residues 63–94 and 143–167; these read RRSD…KESN and KQRC…DAGV. The OVATE domain maps to 286-345; it reads VVKCSSDPQKDFRDSMIEMIMENGINHPEELKELLVCYLRLNTDEYHDMIISVFQQVHND.

Interacts with BLH1, BLH2, BLH3, BLH4, BLH6 and BLH10. As to expression, expressed in roots, rosette and cauline leaves, and flower buds.

The protein resides in the nucleus. Its function is as follows. Transcriptional repressor that regulates multiple aspects of plant growth and development through the regulation of BEL1-LIKE (BLH) and KNOX TALE (KNAT) homeodomain transcription factors. Required for embryo development. The sequence is that of Transcription repressor OFP5 (OFP5) from Arabidopsis thaliana (Mouse-ear cress).